The sequence spans 267 residues: REH2-associated factor 2 (267 aa).

In terms of assembly, component of the REH2-associated complex (REH2C) composed of helicase REH2, associated factors H2F1 and H2F2, and mRNAs at various editing stages; the formation of the complex is RNA-independent. Interacts with various editing complexes including the RNA editing core (RECC) complex, the gRNA-binding (GRBC) complex (also known as the MRB1 complex) and the RNA editing mediator (REMC) complex.

The protein resides in the mitochondrion. In terms of biological role, may play a role in mitochondrial mRNA editing by facilitating the association of the gRNA-binding (GRBC) complex with the RNA editing core (RECC) complex. However, appears to be dispensable for mRNA editing per se. This is REH2-associated factor 2 from Trypanosoma brucei brucei (strain 927/4 GUTat10.1).